Consider the following 101-residue polypeptide: Protein RnfH (101 aa).

Belongs to the UPF0125 (RnfH) family.

This chain is Protein RnfH, found in Pseudomonas aeruginosa (strain UCBPP-PA14).